A 468-amino-acid chain; its full sequence is 3-isopropylmalate dehydratase large subunit (468 aa).

The [4Fe-4S] cluster site is built by C347, C407, and C410. Residues 424–441 show a composition bias toward polar residues; it reads SASSSNRNFKGRQGSPSG. The segment at 424–443 is disordered; the sequence is SASSSNRNFKGRQGSPSGRT.

The protein belongs to the aconitase/IPM isomerase family. LeuC type 1 subfamily. In terms of assembly, heterodimer of LeuC and LeuD. It depends on [4Fe-4S] cluster as a cofactor.

It catalyses the reaction (2R,3S)-3-isopropylmalate = (2S)-2-isopropylmalate. Its pathway is amino-acid biosynthesis; L-leucine biosynthesis; L-leucine from 3-methyl-2-oxobutanoate: step 2/4. In terms of biological role, catalyzes the isomerization between 2-isopropylmalate and 3-isopropylmalate, via the formation of 2-isopropylmaleate. This Prochlorococcus marinus (strain MIT 9215) protein is 3-isopropylmalate dehydratase large subunit.